The primary structure comprises 208 residues: uncharacterized protein (208 aa).

The signal sequence occupies residues 1–16; sequence MKFLLIACLAVPAILA. N-linked (GlcNAc...) asparagine glycosylation is present at N79.

This is an uncharacterized protein from Caenorhabditis elegans.